The primary structure comprises 56 residues: Large ribosomal subunit protein bL32 (56 aa).

Over residues 1 to 16 (MAVQKNRKTRSKRGMR) the composition is skewed to basic residues. The disordered stretch occupies residues 1 to 28 (MAVQKNRKTRSKRGMRRSHDALTTAALS).

It belongs to the bacterial ribosomal protein bL32 family.

The protein is Large ribosomal subunit protein bL32 of Vibrio campbellii (strain ATCC BAA-1116).